Consider the following 906-residue polypeptide: Rho GTPase-activating protein gacJ (906 aa).

The disordered stretch occupies residues 53–117; sequence LEGHLNPSSH…RDNSRSDNIR (65 aa). A compositionally biased stretch (low complexity) spans 69–79; that stretch reads NNNNNNNNNNN. Basic and acidic residues predominate over residues 92-117; sequence SRSDSKHHNRENSKSDRDNSRSDNIR. In terms of domain architecture, Rho-GAP spans 161–348; that stretch reads EELQSLYPDQ…YMLEYFNDIF (188 aa). Disordered stretches follow at residues 368–415, 452–864, and 877–906; these read DTTS…SRSK, EIIP…SVLT, and ANQA…NINK. The span at 381–404 shows a compositional bias: polar residues; it reads NGGSPRTSNTPYQQQHQLSSQSMA. Residues 461–487 show a composition bias toward low complexity; it reads TTTTTTTTTNTTTTTTTTNTTPNNTTT. 2 stretches are compositionally biased toward pro residues: residues 494–510 and 547–560; these read PVPP…PPNP and QPPP…PSPP. Polar residues predominate over residues 565–574; the sequence is KPTSKSDFIP. 2 stretches are compositionally biased toward low complexity: residues 575–597 and 613–629; these read STNN…SIPK and IEEP…TTTT. Residues 637–649 show a composition bias toward polar residues; that stretch reads FKNNGTISSGSKS. 2 stretches are compositionally biased toward low complexity: residues 650–663 and 683–694; these read NPNL…NQPL and SKPITTTPTIKK. Pro residues predominate over residues 708 to 721; sequence PPSPSSSSPSPPHN. 3 stretches are compositionally biased toward low complexity: residues 754-772, 785-816, and 844-861; these read PTIP…PTTP, PPIN…STPK, and SSPT…SSPS. Over residues 880–890 the composition is skewed to polar residues; that stretch reads AKKNPLSNSGG.

Its subcellular location is the cytoplasm. Rho GTPase-activating protein involved in the signal transduction pathway. The protein is Rho GTPase-activating protein gacJ (gacJ) of Dictyostelium discoideum (Social amoeba).